Reading from the N-terminus, the 223-residue chain is Small ribosomal subunit protein uS3 (223 aa).

Residues I38–R106 form the KH type-2 domain.

The protein belongs to the universal ribosomal protein uS3 family. Part of the 30S ribosomal subunit. Forms a tight complex with proteins S10 and S14.

Functionally, binds the lower part of the 30S subunit head. Binds mRNA in the 70S ribosome, positioning it for translation. This Rhodospirillum rubrum (strain ATCC 11170 / ATH 1.1.1 / DSM 467 / LMG 4362 / NCIMB 8255 / S1) protein is Small ribosomal subunit protein uS3.